We begin with the raw amino-acid sequence, 490 residues long: Aspartyl/glutamyl-tRNA(Asn/Gln) amidotransferase subunit B (490 aa).

This sequence belongs to the GatB/GatE family. GatB subfamily. Heterotrimer of A, B and C subunits.

The catalysed reaction is L-glutamyl-tRNA(Gln) + L-glutamine + ATP + H2O = L-glutaminyl-tRNA(Gln) + L-glutamate + ADP + phosphate + H(+). The enzyme catalyses L-aspartyl-tRNA(Asn) + L-glutamine + ATP + H2O = L-asparaginyl-tRNA(Asn) + L-glutamate + ADP + phosphate + 2 H(+). In terms of biological role, allows the formation of correctly charged Asn-tRNA(Asn) or Gln-tRNA(Gln) through the transamidation of misacylated Asp-tRNA(Asn) or Glu-tRNA(Gln) in organisms which lack either or both of asparaginyl-tRNA or glutaminyl-tRNA synthetases. The reaction takes place in the presence of glutamine and ATP through an activated phospho-Asp-tRNA(Asn) or phospho-Glu-tRNA(Gln). This Prochlorococcus marinus subsp. pastoris (strain CCMP1986 / NIES-2087 / MED4) protein is Aspartyl/glutamyl-tRNA(Asn/Gln) amidotransferase subunit B.